Here is a 144-residue protein sequence, read N- to C-terminus: L-fucose mutarotase (144 aa).

Catalysis depends on histidine 22, which acts as the Proton donor. Substrate contacts are provided by residues aspartate 30, arginine 109, and 131-133 (YGN).

This sequence belongs to the RbsD / FucU family. FucU mutarotase subfamily. Homodecamer.

The protein localises to the cytoplasm. It catalyses the reaction alpha-L-fucose = beta-L-fucose. The protein operates within carbohydrate metabolism; L-fucose metabolism. Its function is as follows. Involved in the anomeric conversion of L-fucose. This Histophilus somni (strain 2336) (Haemophilus somnus) protein is L-fucose mutarotase.